Reading from the N-terminus, the 209-residue chain is GTP cyclohydrolase-2 (209 aa).

49–53 contributes to the GTP binding site; that stretch reads RIHSE. Residues cysteine 54, cysteine 65, and cysteine 67 each contribute to the Zn(2+) site. GTP is bound by residues glutamine 70, 92-94, and threonine 114; that span reads EGR. Aspartate 126 acts as the Proton acceptor in catalysis. The active-site Nucleophile is arginine 128. Residues threonine 149 and lysine 154 each coordinate GTP.

Belongs to the GTP cyclohydrolase II family. Zn(2+) is required as a cofactor.

The catalysed reaction is GTP + 4 H2O = 2,5-diamino-6-hydroxy-4-(5-phosphoribosylamino)-pyrimidine + formate + 2 phosphate + 3 H(+). The protein operates within cofactor biosynthesis; riboflavin biosynthesis; 5-amino-6-(D-ribitylamino)uracil from GTP: step 1/4. Catalyzes the conversion of GTP to 2,5-diamino-6-ribosylamino-4(3H)-pyrimidinone 5'-phosphate (DARP), formate and pyrophosphate. This chain is GTP cyclohydrolase-2, found in Shewanella halifaxensis (strain HAW-EB4).